The primary structure comprises 147 residues: MADHDLVLKCWGAVEADYAANGGEVLNRLFKEYPDTLKLFPKFSGISQGDLAGSPAVAAHGATVLKKLGELLKAKGDHAALLKPLANTHANIHKVALNNFRLITEVLVKVMAEKAGLDAAGQGALRRVMDAVIGDIDGYYKEIGFAG.

Positions 2–141 constitute a Globin domain; that stretch reads ADHDLVLKCW…VIGDIDGYYK (140 aa). A nitrite-binding site is contributed by His-60. His-60 contacts O2. His-89 contacts heme b.

It belongs to the globin family. In terms of assembly, monomeric.

The protein resides in the cytoplasm. Its subcellular location is the sarcoplasm. The enzyme catalyses Fe(III)-heme b-[protein] + nitric oxide + H2O = Fe(II)-heme b-[protein] + nitrite + 2 H(+). It carries out the reaction H2O2 + AH2 = A + 2 H2O. In terms of biological role, monomeric heme protein which primary function is to store oxygen and facilitate its diffusion within muscle tissues. Reversibly binds oxygen through a pentacoordinated heme iron and enables its timely and efficient release as needed during periods of heightened demand. Depending on the oxidative conditions of tissues and cells, and in addition to its ability to bind oxygen, it also has a nitrite reductase activity whereby it regulates the production of bioactive nitric oxide. Under stress conditions, like hypoxia and anoxia, it also protects cells against reactive oxygen species thanks to its pseudoperoxidase activity. The protein is Myoglobin (mb) of Danio rerio (Zebrafish).